We begin with the raw amino-acid sequence, 262 residues long: Ornithine carbamoyltransferase (262 aa).

Residues 3–7 (STRTR), Q30, R54, and 81–84 (HPTQ) each bind carbamoyl phosphate. Residues N114, D178, and 182 to 183 (SM) each bind L-ornithine. Carbamoyl phosphate contacts are provided by residues 219 to 222 (HCLP) and T247.

The protein belongs to the aspartate/ornithine carbamoyltransferase superfamily. OTCase family.

Its subcellular location is the cytoplasm. The catalysed reaction is carbamoyl phosphate + L-ornithine = L-citrulline + phosphate + H(+). The protein operates within amino-acid biosynthesis; L-arginine biosynthesis; L-arginine from L-ornithine and carbamoyl phosphate: step 1/3. Its pathway is amino-acid degradation; L-arginine degradation via ADI pathway; carbamoyl phosphate from L-arginine: step 2/2. Its function is as follows. Reversibly catalyzes the transfer of the carbamoyl group from carbamoyl phosphate (CP) to the N(epsilon) atom of ornithine (ORN) to produce L-citrulline. In Neisseria meningitidis, this protein is Ornithine carbamoyltransferase (argF).